A 365-amino-acid polypeptide reads, in one-letter code: uncharacterized protein (365 aa).

Residues 18-46 (TAQEALTLIEKLDSDYKEKEEKITALSVH) adopt a coiled-coil conformation.

This is an uncharacterized protein from Bacillus subtilis (strain 168).